We begin with the raw amino-acid sequence, 187 residues long: Elongation factor P (187 aa).

This sequence belongs to the elongation factor P family.

The protein localises to the cytoplasm. It participates in protein biosynthesis; polypeptide chain elongation. Its function is as follows. Involved in peptide bond synthesis. Stimulates efficient translation and peptide-bond synthesis on native or reconstituted 70S ribosomes in vitro. Probably functions indirectly by altering the affinity of the ribosome for aminoacyl-tRNA, thus increasing their reactivity as acceptors for peptidyl transferase. In Desulfatibacillum aliphaticivorans, this protein is Elongation factor P.